The primary structure comprises 551 residues: Membrane protein insertase YidC (551 aa).

Residues Tyr6–Asp26 traverse the membrane as a helical segment. Low complexity predominate over residues Ser34–Ser50. The tract at residues Ser34–Pro68 is disordered. Residues Ala56–Pro68 are compositionally biased toward polar residues. A run of 5 helical transmembrane segments spans residues Thr340–Ile360, Phe363–Phe383, Leu433–Leu453, Phe464–Met484, and Ile509–Trp529.

The protein belongs to the OXA1/ALB3/YidC family. Type 1 subfamily. As to quaternary structure, interacts with the Sec translocase complex via SecD. Specifically interacts with transmembrane segments of nascent integral membrane proteins during membrane integration.

It is found in the cell inner membrane. Required for the insertion and/or proper folding and/or complex formation of integral membrane proteins into the membrane. Involved in integration of membrane proteins that insert both dependently and independently of the Sec translocase complex, as well as at least some lipoproteins. Aids folding of multispanning membrane proteins. The sequence is that of Membrane protein insertase YidC from Marinomonas sp. (strain MWYL1).